The primary structure comprises 157 residues: Endoribonuclease YbeY (157 aa).

Zn(2+) is bound by residues H118, H122, and H128.

Belongs to the endoribonuclease YbeY family. Requires Zn(2+) as cofactor.

The protein localises to the cytoplasm. In terms of biological role, single strand-specific metallo-endoribonuclease involved in late-stage 70S ribosome quality control and in maturation of the 3' terminus of the 16S rRNA. In Bordetella parapertussis (strain 12822 / ATCC BAA-587 / NCTC 13253), this protein is Endoribonuclease YbeY.